The chain runs to 86 residues: Exodeoxyribonuclease 7 small subunit (86 aa).

Belongs to the XseB family. Heterooligomer composed of large and small subunits.

The protein resides in the cytoplasm. It carries out the reaction Exonucleolytic cleavage in either 5'- to 3'- or 3'- to 5'-direction to yield nucleoside 5'-phosphates.. Bidirectionally degrades single-stranded DNA into large acid-insoluble oligonucleotides, which are then degraded further into small acid-soluble oligonucleotides. This Xanthomonas axonopodis pv. citri (strain 306) protein is Exodeoxyribonuclease 7 small subunit.